The sequence spans 248 residues: DNA repair protein RecO (248 aa).

This sequence belongs to the RecO family.

In terms of biological role, involved in DNA repair and RecF pathway recombination. The polypeptide is DNA repair protein RecO (Bacillus cereus (strain 03BB102)).